Consider the following 487-residue polypeptide: Probable Xaa-Pro aminopeptidase AFUB_014460 (487 aa).

Positions 267, 278, 416, and 455 each coordinate Mn(2+).

This sequence belongs to the peptidase M24B family. Mn(2+) is required as a cofactor.

The catalysed reaction is Release of any N-terminal amino acid, including proline, that is linked to proline, even from a dipeptide or tripeptide.. In terms of biological role, catalyzes the removal of a penultimate prolyl residue from the N-termini of peptides. The protein is Probable Xaa-Pro aminopeptidase AFUB_014460 of Aspergillus fumigatus (strain CBS 144.89 / FGSC A1163 / CEA10) (Neosartorya fumigata).